An 809-amino-acid chain; its full sequence is DNA replication helicase (809 aa).

Residue 72–79 (GTAGAGKS) participates in ATP binding.

This sequence belongs to the herpesviridae helicase family. In terms of assembly, associates with the primase and the primase-associated factor to form the helicase-primase complex.

The protein resides in the host nucleus. Its function is as follows. Component of the helicase/primase complex. Unwinds the DNA at the replication forks and generates single-stranded DNA for both leading and lagging strand synthesis. The primase synthesizes short RNA primers on the lagging strand that the polymerase elongates using dNTPs. Possesses helicase-like motifs and therefore may act as the helicase subunit of the complex. The sequence is that of DNA replication helicase from Epstein-Barr virus (strain B95-8) (HHV-4).